The following is a 307-amino-acid chain: N-acetylmuramic acid 6-phosphate etherase (307 aa).

In terms of domain architecture, SIS spans 60–223; it reads AAQAIARGGR…STGAMVRIGK (164 aa). Glu-88 (proton donor) is an active-site residue. Glu-119 is an active-site residue.

This sequence belongs to the GCKR-like family. MurNAc-6-P etherase subfamily. In terms of assembly, homodimer.

It catalyses the reaction N-acetyl-D-muramate 6-phosphate + H2O = N-acetyl-D-glucosamine 6-phosphate + (R)-lactate. It participates in amino-sugar metabolism; N-acetylmuramate degradation. Functionally, specifically catalyzes the cleavage of the D-lactyl ether substituent of MurNAc 6-phosphate, producing GlcNAc 6-phosphate and D-lactate. This chain is N-acetylmuramic acid 6-phosphate etherase, found in Synechococcus elongatus (strain ATCC 33912 / PCC 7942 / FACHB-805) (Anacystis nidulans R2).